A 261-amino-acid chain; its full sequence is Putative carbamate hydrolase RutD (261 aa).

The region spanning 14–119 is the AB hydrolase-1 domain; that stretch reads PTILLSSGLG…LINAWSKADP (106 aa).

The protein belongs to the AB hydrolase superfamily. Hydrolase RutD family.

The enzyme catalyses carbamate + 2 H(+) = NH4(+) + CO2. Its function is as follows. Involved in pyrimidine catabolism. May facilitate the hydrolysis of carbamate, a reaction that can also occur spontaneously. This chain is Putative carbamate hydrolase RutD, found in Agrobacterium fabrum (strain C58 / ATCC 33970) (Agrobacterium tumefaciens (strain C58)).